Here is a 439-residue protein sequence, read N- to C-terminus: MNALAYLDLPHIRQARGLAALPGSKSISNRVLLIAALAEGRTEISGLLDSDDTRVMLAALRQLGVAVTDLGQGRVAVEGARRFPAEKAELFLGNAGTAFRPLTAALALMGGDYRLSGVPRMHERPIGDLVDALRAWGARIDYLGQAGYPPLHIGRGDIRADRVRVQGSVSSQFLTALLLAAPIEAGASGRPVTIEVIGELISKPYIEITLNLMARYGVNVVRDGWRAFTIEGDARYRSPGSIAVEGDASTASYLLALGVLGGGPVRVTGVGEQSIQGDTAFADTLAAMGANITKGSDWIEASGQAVAEGGRIKAFDADFNLIPDAAMTAATMALFADGPCRLRNIGSWRVKETDRIHAMHTELAKLGAKVESGPDWLSLTPPADSDWRDAHIGTWDDHRMAMCFSLAAFGPAAVRILDPGCVSKTFPDYFDVYAGLVSA.

3-phosphoshikimate is bound by residues Lys25, Ser26, and Arg30. Lys25 is a binding site for phosphoenolpyruvate. Residues Gly96 and Arg124 each coordinate phosphoenolpyruvate. Ser170, Ser171, Gln172, Ser202, Asp324, and Lys351 together coordinate 3-phosphoshikimate. Gln172 contributes to the phosphoenolpyruvate binding site. The active-site Proton acceptor is Asp324. Phosphoenolpyruvate contacts are provided by Arg355, Arg399, and Lys424.

The protein belongs to the EPSP synthase family. As to quaternary structure, monomer.

Its subcellular location is the cytoplasm. It catalyses the reaction 3-phosphoshikimate + phosphoenolpyruvate = 5-O-(1-carboxyvinyl)-3-phosphoshikimate + phosphate. The protein operates within metabolic intermediate biosynthesis; chorismate biosynthesis; chorismate from D-erythrose 4-phosphate and phosphoenolpyruvate: step 6/7. Catalyzes the transfer of the enolpyruvyl moiety of phosphoenolpyruvate (PEP) to the 5-hydroxyl of shikimate-3-phosphate (S3P) to produce enolpyruvyl shikimate-3-phosphate and inorganic phosphate. The sequence is that of 3-phosphoshikimate 1-carboxyvinyltransferase from Bordetella avium (strain 197N).